Consider the following 96-residue polypeptide: Aspartyl/glutamyl-tRNA(Asn/Gln) amidotransferase subunit C (96 aa).

Belongs to the GatC family. Heterotrimer of A, B and C subunits.

It carries out the reaction L-glutamyl-tRNA(Gln) + L-glutamine + ATP + H2O = L-glutaminyl-tRNA(Gln) + L-glutamate + ADP + phosphate + H(+). It catalyses the reaction L-aspartyl-tRNA(Asn) + L-glutamine + ATP + H2O = L-asparaginyl-tRNA(Asn) + L-glutamate + ADP + phosphate + 2 H(+). Functionally, allows the formation of correctly charged Asn-tRNA(Asn) or Gln-tRNA(Gln) through the transamidation of misacylated Asp-tRNA(Asn) or Glu-tRNA(Gln) in organisms which lack either or both of asparaginyl-tRNA or glutaminyl-tRNA synthetases. The reaction takes place in the presence of glutamine and ATP through an activated phospho-Asp-tRNA(Asn) or phospho-Glu-tRNA(Gln). In Fusobacterium nucleatum subsp. nucleatum (strain ATCC 25586 / DSM 15643 / BCRC 10681 / CIP 101130 / JCM 8532 / KCTC 2640 / LMG 13131 / VPI 4355), this protein is Aspartyl/glutamyl-tRNA(Asn/Gln) amidotransferase subunit C.